A 319-amino-acid chain; its full sequence is Probable casein kinase II subunit alpha homolog (319 aa).

The Protein kinase domain occupies 37-316; sequence YQIYQRMGRG…ADECLRHPLF (280 aa). ATP is bound by residues 43 to 51 and Lys64; that span reads MGRGKYSEV. Asp151 acts as the Proton acceptor in catalysis.

It belongs to the protein kinase superfamily. Ser/Thr protein kinase family. CK2 subfamily. As to quaternary structure, tetramer composed of two alpha chains, one beta chain and one beta' chain.

It carries out the reaction L-seryl-[protein] + ATP = O-phospho-L-seryl-[protein] + ADP + H(+). It catalyses the reaction L-threonyl-[protein] + ATP = O-phospho-L-threonyl-[protein] + ADP + H(+). Catalytic subunit of a constitutively active serine/threonine-protein kinase complex that phosphorylates a large number of substrates containing acidic residues C-terminal to the phosphorylated serine or threonine. The sequence is that of Probable casein kinase II subunit alpha homolog (CKA1) from Encephalitozoon cuniculi (strain GB-M1) (Microsporidian parasite).